We begin with the raw amino-acid sequence, 81 residues long: Short neurotoxin 2 (81 aa).

The signal sequence occupies residues 1–21; it reads MKTLLLTLVVVTIVCLDLGYT. 4 disulfides stabilise this stretch: Cys-24–Cys-43, Cys-38–Cys-60, Cys-62–Cys-73, and Cys-74–Cys-79.

This sequence belongs to the three-finger toxin family. Short-chain subfamily. Type I alpha-neurotoxin sub-subfamily. Expressed by the venom gland.

The protein localises to the secreted. In terms of biological role, binds to muscle nicotinic acetylcholine receptor (nAChR) and inhibit acetylcholine from binding to the receptor, thereby impairing neuromuscular transmission. This is Short neurotoxin 2 from Hydrophis peronii (Spiny-headed seasnake).